The primary structure comprises 122 residues: Large ribosomal subunit protein uL14c (122 aa).

Belongs to the universal ribosomal protein uL14 family. In terms of assembly, part of the 50S ribosomal subunit.

Its subcellular location is the plastid. The protein localises to the chloroplast. Functionally, binds to 23S rRNA. The polypeptide is Large ribosomal subunit protein uL14c (Populus alba (White poplar)).